We begin with the raw amino-acid sequence, 687 residues long: Methionine--tRNA ligase (687 aa).

Residues 14-24 (PYANGYIHLGH) carry the 'HIGH' region motif. Zn(2+) is bound by residues Cys145, Cys148, Cys158, and Cys161. Residues 329-333 (KMSKS) carry the 'KMSKS' region motif. Lys332 contributes to the ATP binding site. The tRNA-binding domain maps to 585–687 (DFDKVDLRIG…DGAQVGQRVK (103 aa)).

This sequence belongs to the class-I aminoacyl-tRNA synthetase family. MetG type 1 subfamily. Homodimer. Zn(2+) serves as cofactor.

The protein localises to the cytoplasm. The enzyme catalyses tRNA(Met) + L-methionine + ATP = L-methionyl-tRNA(Met) + AMP + diphosphate. Is required not only for elongation of protein synthesis but also for the initiation of all mRNA translation through initiator tRNA(fMet) aminoacylation. The chain is Methionine--tRNA ligase from Bdellovibrio bacteriovorus (strain ATCC 15356 / DSM 50701 / NCIMB 9529 / HD100).